The primary structure comprises 154 residues: 3-dehydroquinate dehydratase (154 aa).

Y22 serves as the catalytic Proton acceptor. Substrate contacts are provided by N73, H79, and D86. Residue H99 is the Proton donor of the active site. Residues 100-101 (LS) and R110 contribute to the substrate site.

The protein belongs to the type-II 3-dehydroquinase family. In terms of assembly, homododecamer.

The enzyme catalyses 3-dehydroquinate = 3-dehydroshikimate + H2O. Its pathway is metabolic intermediate biosynthesis; chorismate biosynthesis; chorismate from D-erythrose 4-phosphate and phosphoenolpyruvate: step 3/7. In terms of biological role, catalyzes a trans-dehydration via an enolate intermediate. The polypeptide is 3-dehydroquinate dehydratase (Carboxydothermus hydrogenoformans (strain ATCC BAA-161 / DSM 6008 / Z-2901)).